The following is a 136-amino-acid chain: Glutamyl-tRNA(Gln) amidotransferase subunit C, mitochondrial (136 aa).

This sequence belongs to the GatC family. As to quaternary structure, subunit of the heterotrimeric GatCAB amidotransferase (AdT) complex, composed of A (QRSL1), B (GATB) and C (GATC) subunits.

The protein localises to the mitochondrion. It catalyses the reaction L-glutamyl-tRNA(Gln) + L-glutamine + ATP + H2O = L-glutaminyl-tRNA(Gln) + L-glutamate + ADP + phosphate + H(+). In terms of biological role, allows the formation of correctly charged Gln-tRNA(Gln) through the transamidation of misacylated Glu-tRNA(Gln) in the mitochondria. The reaction takes place in the presence of glutamine and ATP through an activated gamma-phospho-Glu-tRNA(Gln). In Homo sapiens (Human), this protein is Glutamyl-tRNA(Gln) amidotransferase subunit C, mitochondrial.